The sequence spans 294 residues: Elongation factor Ts (294 aa).

The involved in Mg(2+) ion dislocation from EF-Tu stretch occupies residues 82–85 (TDFV).

This sequence belongs to the EF-Ts family.

The protein localises to the cytoplasm. In terms of biological role, associates with the EF-Tu.GDP complex and induces the exchange of GDP to GTP. It remains bound to the aminoacyl-tRNA.EF-Tu.GTP complex up to the GTP hydrolysis stage on the ribosome. This Psychrobacter arcticus (strain DSM 17307 / VKM B-2377 / 273-4) protein is Elongation factor Ts.